We begin with the raw amino-acid sequence, 287 residues long: Pentatricopeptide repeat-containing protein At4g18975, chloroplastic (287 aa).

A chloroplast-targeting transit peptide spans 1–34 (MALCNLNPTQGIFPLQGLSKSQEFICFSLLQSPR). PPR repeat units lie at residues 165-199 (TMGTYDILLLAFDMDERADEAESLWNMILHTHTRS) and 201-235 (PRRLFARMIALYAHHDLHDKVIEVFADMEELKVSP).

Belongs to the PPR family. P subfamily.

Its subcellular location is the plastid. It is found in the chloroplast. The protein is Pentatricopeptide repeat-containing protein At4g18975, chloroplastic of Arabidopsis thaliana (Mouse-ear cress).